We begin with the raw amino-acid sequence, 341 residues long: Biotin synthase (341 aa).

Positions 40–264 constitute a Radical SAM core domain; it reads NSVKLNYLVN…VAPRSELRIA (225 aa). The [4Fe-4S] cluster site is built by cysteine 55, cysteine 59, and cysteine 62. The [2Fe-2S] cluster site is built by cysteine 99, cysteine 132, cysteine 192, and arginine 262. Residues 317–341 form a disordered region; the sequence is ASAPQGGVEPVLRKRGAGTELQPNA.

This sequence belongs to the radical SAM superfamily. Biotin synthase family. As to quaternary structure, homodimer. Requires [4Fe-4S] cluster as cofactor. It depends on [2Fe-2S] cluster as a cofactor.

The enzyme catalyses (4R,5S)-dethiobiotin + (sulfur carrier)-SH + 2 reduced [2Fe-2S]-[ferredoxin] + 2 S-adenosyl-L-methionine = (sulfur carrier)-H + biotin + 2 5'-deoxyadenosine + 2 L-methionine + 2 oxidized [2Fe-2S]-[ferredoxin]. It functions in the pathway cofactor biosynthesis; biotin biosynthesis; biotin from 7,8-diaminononanoate: step 2/2. Catalyzes the conversion of dethiobiotin (DTB) to biotin by the insertion of a sulfur atom into dethiobiotin via a radical-based mechanism. The sequence is that of Biotin synthase from Renibacterium salmoninarum (strain ATCC 33209 / DSM 20767 / JCM 11484 / NBRC 15589 / NCIMB 2235).